Consider the following 250-residue polypeptide: Ribosomal RNA small subunit methyltransferase J (250 aa).

S-adenosyl-L-methionine contacts are provided by residues 101–102, 117–118, 153–154, and Asp-171; these read RD, ER, and SS.

Belongs to the methyltransferase superfamily. RsmJ family.

Its subcellular location is the cytoplasm. It carries out the reaction guanosine(1516) in 16S rRNA + S-adenosyl-L-methionine = N(2)-methylguanosine(1516) in 16S rRNA + S-adenosyl-L-homocysteine + H(+). In terms of biological role, specifically methylates the guanosine in position 1516 of 16S rRNA. The chain is Ribosomal RNA small subunit methyltransferase J from Klebsiella pneumoniae (strain 342).